The chain runs to 86 residues: Toxin Tpa5 (86 aa).

The N-terminal stretch at 1 to 20 is a signal peptide; sequence MSIFPIALALLLIGLEEGEA. An LCN-type CS-alpha/beta domain is found at 22 to 85; the sequence is RDGYPISKNN…WGDPGTPPCM (64 aa). 4 disulfides stabilise this stretch: Cys-33/Cys-84, Cys-37/Cys-58, Cys-43/Cys-64, and Cys-47/Cys-66.

Belongs to the long (4 C-C) scorpion toxin superfamily. Sodium channel inhibitor family. Beta subfamily. In terms of tissue distribution, expressed by the venom gland.

Its subcellular location is the secreted. Beta toxins bind voltage-independently at site-4 of sodium channels (Nav) and shift the voltage of activation toward more negative potentials thereby affecting sodium channel activation and promoting spontaneous and repetitive firing. In Tityus pachyurus (Colombian scorpion), this protein is Toxin Tpa5.